The following is a 523-amino-acid chain: Cytoplasmic dynein 1 light intermediate chain 1 (523 aa).

The interval 1–25 (MAAVGRVGSFGSSPPGLSSTYTGGP) is disordered. Positions 9 to 19 (SFGSSPPGLSS) are enriched in low complexity. 74–81 (GEDGAGKT) is an ATP binding site. A Phosphoserine modification is found at S207. Position 213 is a phosphothreonine (T213). Disordered regions lie at residues 387–434 (PPTA…DPNM) and 456–523 (TGSP…GEAS). Residues S398 and S405 each carry the phosphoserine modification. T408 carries the post-translational modification Phosphothreonine. Phosphoserine is present on residues S412, S419, S421, and S427. The span at 412–421 (SVSSNVASVS) shows a compositional bias: low complexity. The span at 458-478 (SPGGPGVSGGSPAGGAGGGSS) shows a compositional bias: gly residues. S487 carries the post-translational modification Phosphoserine. Basic and acidic residues predominate over residues 493–503 (LDVHAELDRIT). Residues 506–523 (PVTVSPTTPTSPTEGEAS) are compositionally biased toward low complexity. S510 bears the Phosphoserine mark. A phosphothreonine mark is found at T512, T513, and T515. At S516 the chain carries Phosphoserine.

This sequence belongs to the dynein light intermediate chain family. As to quaternary structure, homodimer. The cytoplasmic dynein 1 complex consists of two catalytic heavy chains (HCs) and a number of non-catalytic subunits presented by intermediate chains (ICs), light intermediate chains (LICs) and light chains (LCs); the composition seems to vary in respect to the IC, LIC and LC composition. The heavy chain homodimer serves as a scaffold for the probable homodimeric assembly of the respective non-catalytic subunits. The ICs and LICs bind directly to the HC dimer and the LCs assemble on the IC dimer. Self-associates. Interacts with DYNC1H1; DYNC1LI1 and DYNC1LI2 bind mutually exclusive to DYNC1H1. Interacts with PCNT. Forms a complex with RAB11FIP3 and RAB11A1; the interaction between DYNC1LI1 and RAB11FIP3 is direct and induces DYNC1LI1 localization onto endosomal membrane; the complex regulates endocytic trafficking. Interacts with RUFY3. In terms of assembly, (Microbial infection) Interacts with human adenovirus 5 hexon protein; this interaction probably allows virus intracellular transport. In terms of processing, phosphorylated during mitosis but not in interphase.

Its subcellular location is the cytoplasm. It is found in the chromosome. It localises to the centromere. The protein resides in the kinetochore. The protein localises to the cytoskeleton. Its subcellular location is the spindle pole. It is found in the recycling endosome membrane. In terms of biological role, acts as one of several non-catalytic accessory components of the cytoplasmic dynein 1 complex that are thought to be involved in linking dynein to cargos and to adapter proteins that regulate dynein function. Cytoplasmic dynein 1 acts as a motor for the intracellular retrograde motility of vesicles and organelles along microtubules. May play a role in binding dynein to membranous organelles or chromosomes. Probably involved in the microtubule-dependent transport of pericentrin. Is required for progress through the spindle assembly checkpoint. The phosphorylated form appears to be involved in the selective removal of MAD1L1 and MAD1L2 but not BUB1B from kinetochores. Forms a functional Rab11/RAB11FIP3/dynein complex onto endosomal membrane that regulates the movement of peripheral sorting endosomes (SE) along microtubule tracks toward the microtubule organizing center/centrosome, generating the endosomal recycling compartment (ERC). In Homo sapiens (Human), this protein is Cytoplasmic dynein 1 light intermediate chain 1 (DYNC1LI1).